A 396-amino-acid chain; its full sequence is S-adenosylmethionine synthase 1 (396 aa).

Glutamate 13 contributes to the Mg(2+) binding site. Residue histidine 19 participates in ATP binding. Residue glutamate 47 participates in K(+) binding. L-methionine is bound by residues glutamate 60 and glutamine 103. Residues 171–173 (DGK), 239–242 (SGRF), aspartate 250, 256–257 (RK), alanine 273, lysine 277, and lysine 281 each bind ATP. Aspartate 250 is an L-methionine binding site. Lysine 281 contributes to the L-methionine binding site.

It belongs to the AdoMet synthase family. As to quaternary structure, homotetramer. It depends on Mn(2+) as a cofactor. Mg(2+) serves as cofactor. The cofactor is Co(2+). Requires K(+) as cofactor.

Its subcellular location is the cytoplasm. It carries out the reaction L-methionine + ATP + H2O = S-adenosyl-L-methionine + phosphate + diphosphate. The protein operates within amino-acid biosynthesis; S-adenosyl-L-methionine biosynthesis; S-adenosyl-L-methionine from L-methionine: step 1/1. Its function is as follows. Catalyzes the formation of S-adenosylmethionine from methionine and ATP. The reaction comprises two steps that are both catalyzed by the same enzyme: formation of S-adenosylmethionine (AdoMet) and triphosphate, and subsequent hydrolysis of the triphosphate. May be involved in the synthesis of betain in response to abiotic stress such as high salinity. In Beta vulgaris (Sugar beet), this protein is S-adenosylmethionine synthase 1 (SAMS1).